The chain runs to 296 residues: 33 kDa chaperonin (296 aa).

2 disulfide bridges follow: Cys-238–Cys-240 and Cys-271–Cys-274.

Belongs to the HSP33 family. In terms of processing, under oxidizing conditions two disulfide bonds are formed involving the reactive cysteines. Under reducing conditions zinc is bound to the reactive cysteines and the protein is inactive.

It localises to the cytoplasm. In terms of biological role, redox regulated molecular chaperone. Protects both thermally unfolding and oxidatively damaged proteins from irreversible aggregation. Plays an important role in the bacterial defense system toward oxidative stress. The chain is 33 kDa chaperonin from Clostridium botulinum (strain 657 / Type Ba4).